We begin with the raw amino-acid sequence, 35 residues long: TCSNKGQQCGDDSDCCWHLCCVNNKCAHLILLCNL.

4 disulfide bridges follow: Cys-2/Cys-16, Cys-9/Cys-21, Cys-15/Cys-26, and Cys-20/Cys-33.

This sequence belongs to the conotoxin I1 superfamily. As to expression, expressed by the venom duct.

Its subcellular location is the secreted. The chain is Conotoxin M11.2 from Conus magus (Magical cone).